Reading from the N-terminus, the 530-residue chain is Proline--tRNA ligase, cytoplasmic (530 aa).

This sequence belongs to the class-II aminoacyl-tRNA synthetase family.

The protein localises to the cytoplasm. Its subcellular location is the cytosol. The catalysed reaction is tRNA(Pro) + L-proline + ATP = L-prolyl-tRNA(Pro) + AMP + diphosphate. Its function is as follows. Catalyzes the attachment of proline to tRNA(Pro) in a two-step reaction: proline is first activated by ATP to form Pro-AMP and then transferred to the acceptor end of tRNA(Pro). This chain is Proline--tRNA ligase, cytoplasmic, found in Arabidopsis thaliana (Mouse-ear cress).